We begin with the raw amino-acid sequence, 292 residues long: Shikimate dehydrogenase (NADP(+)) (292 aa).

Shikimate is bound by residues 22-24 (SLS) and S69. Catalysis depends on K73, which acts as the Proton acceptor. Residues N94 and D111 each contribute to the shikimate site. NADP(+) contacts are provided by residues 135-139 (GVGGA) and I236. Position 238 (Y238) interacts with shikimate. G260 serves as a coordination point for NADP(+).

This sequence belongs to the shikimate dehydrogenase family. In terms of assembly, homodimer.

It catalyses the reaction shikimate + NADP(+) = 3-dehydroshikimate + NADPH + H(+). It functions in the pathway metabolic intermediate biosynthesis; chorismate biosynthesis; chorismate from D-erythrose 4-phosphate and phosphoenolpyruvate: step 4/7. In terms of biological role, involved in the biosynthesis of the chorismate, which leads to the biosynthesis of aromatic amino acids. Catalyzes the reversible NADPH linked reduction of 3-dehydroshikimate (DHSA) to yield shikimate (SA). The protein is Shikimate dehydrogenase (NADP(+)) of Streptococcus pyogenes serotype M2 (strain MGAS10270).